Consider the following 38-residue polypeptide: Large ribosomal subunit protein bL36 (38 aa).

It belongs to the bacterial ribosomal protein bL36 family.

In Polynucleobacter necessarius subsp. necessarius (strain STIR1), this protein is Large ribosomal subunit protein bL36.